We begin with the raw amino-acid sequence, 781 residues long: Zinc finger protein klf1 (781 aa).

2 consecutive C2H2-type zinc fingers follow at residues 17–41 and 47–70; these read YKCD…FRSH and FICP…NQKH.

It localises to the nucleus. It is found in the cytoplasm. The protein localises to the cytoskeleton. Its subcellular location is the spindle. In terms of biological role, required for maintaining cell viability in nitrogen-deficient stationary phase (G0) cells. This Schizosaccharomyces pombe (strain 972 / ATCC 24843) (Fission yeast) protein is Zinc finger protein klf1 (klf1).